The following is a 439-amino-acid chain: 3-phosphoshikimate 1-carboxyvinyltransferase (439 aa).

K29, S30, and R34 together coordinate 3-phosphoshikimate. Residue K29 coordinates phosphoenolpyruvate. G100 and R128 together coordinate phosphoenolpyruvate. 6 residues coordinate 3-phosphoshikimate: S173, S174, Q175, S201, D321, and K348. Q175 lines the phosphoenolpyruvate pocket. Residue D321 is the Proton acceptor of the active site. 2 residues coordinate phosphoenolpyruvate: R352 and R395.

The protein belongs to the EPSP synthase family. In terms of assembly, monomer.

It is found in the cytoplasm. The enzyme catalyses 3-phosphoshikimate + phosphoenolpyruvate = 5-O-(1-carboxyvinyl)-3-phosphoshikimate + phosphate. The protein operates within metabolic intermediate biosynthesis; chorismate biosynthesis. In terms of biological role, catalyzes the transfer of the enolpyruvyl moiety of phosphoenolpyruvate (PEP) to the 5-hydroxyl of shikimate-3-phosphate (S3P) to produce enolpyruvyl shikimate-3-phosphate and inorganic phosphate. The chain is 3-phosphoshikimate 1-carboxyvinyltransferase from Halobacterium salinarum (strain ATCC 700922 / JCM 11081 / NRC-1) (Halobacterium halobium).